We begin with the raw amino-acid sequence, 101 residues long: Signal recognition particle 19 kDa protein (101 aa).

The protein belongs to the SRP19 family. As to quaternary structure, part of the signal recognition particle protein translocation system, which is composed of SRP and FtsY. Archaeal SRP consists of a 7S RNA molecule of 300 nucleotides and two protein subunits: SRP54 and SRP19.

The protein resides in the cytoplasm. Involved in targeting and insertion of nascent membrane proteins into the cytoplasmic membrane. Binds directly to 7S RNA and mediates binding of the 54 kDa subunit of the SRP. In Thermofilum pendens (strain DSM 2475 / Hrk 5), this protein is Signal recognition particle 19 kDa protein.